A 210-amino-acid polypeptide reads, in one-letter code: UPF0301 protein OCAR_7326/OCA5_c07920 (210 aa).

Belongs to the UPF0301 (AlgH) family.

The sequence is that of UPF0301 protein OCAR_7326/OCA5_c07920 from Afipia carboxidovorans (strain ATCC 49405 / DSM 1227 / KCTC 32145 / OM5) (Oligotropha carboxidovorans).